Reading from the N-terminus, the 350-residue chain is Neurogenic differentiation factor 1 (350 aa).

The tract at residues 1–91 is disordered; that stretch reads MTKSYSEESM…KKKKMTKARM (91 aa). Low complexity predominate over residues 7 to 18; the sequence is EESMMLESQSSS. The segment covering 22–38 has biased composition (basic and acidic residues); sequence DKCHSSSQDERDVDKTS. The span at 44–72 shows a compositional bias: acidic residues; that stretch reads DMEDDDDAGLNRLEDEDDEEEEEEEEDGD. The span at 76 to 91 shows a compositional bias: basic residues; the sequence is PKRRGPKKKKMTKARM. The short motif at 82–88 is the Nuclear localization signal element; that stretch reads KKKKMTK. Positions 96–148 constitute a bHLH domain; that stretch reads MRRMKANARERNRMHGLNDALESLRKVVPCYSKTQKLSKIETLRLAKNYIWAL.

As to quaternary structure, efficient DNA binding requires dimerization with another bHLH protein. As to expression, in the embryo, expressed broadly in a subset of primary neurons in the brain and spinal cord. At 28 hours post-fertilization (hpf), regions of expression include telencephalon, olfactory placode, epiphysis, cranial ganglia, acoustic ganglia, Rohon-Beard mechano-sensory neurons and motoneurons. In 2 day postembryonic brain, expressed in many brain regions but absent from subpallium, the ventral preoptic region, ventral thalamus and hypothalamus; sites of expression extend laterally from the ventricular proliferative regions and correspond to freshly determined cell populations. In adult, expressed in all tissues examined with highest levels in brain.

The protein resides in the cytoplasm. Its subcellular location is the nucleus. Its function is as follows. May act as a transcriptional activator. Differentiation factor required for neurogenesis. Acts as an upstream activator of isl1. The chain is Neurogenic differentiation factor 1 from Danio rerio (Zebrafish).